The primary structure comprises 430 residues: Adenylosuccinate synthetase (430 aa).

GTP-binding positions include 13–19 (GDEGKGK) and 41–43 (GHT). Residue D14 is the Proton acceptor of the active site. Residues D14 and G41 each contribute to the Mg(2+) site. IMP is bound by residues 14-17 (DEGK), 39-42 (NAGH), T130, R144, Q225, T240, and R304. H42 serves as the catalytic Proton donor. A substrate-binding site is contributed by 300 to 306 (STTGRAR). GTP-binding positions include R306, 332–334 (KLD), and 414–416 (STG).

This sequence belongs to the adenylosuccinate synthetase family. In terms of assembly, homodimer. Requires Mg(2+) as cofactor.

Its subcellular location is the cytoplasm. It carries out the reaction IMP + L-aspartate + GTP = N(6)-(1,2-dicarboxyethyl)-AMP + GDP + phosphate + 2 H(+). The protein operates within purine metabolism; AMP biosynthesis via de novo pathway; AMP from IMP: step 1/2. In terms of biological role, plays an important role in the de novo pathway of purine nucleotide biosynthesis. Catalyzes the first committed step in the biosynthesis of AMP from IMP. The protein is Adenylosuccinate synthetase of Pseudomonas entomophila (strain L48).